A 273-amino-acid chain; its full sequence is Ethanolamine ammonia-lyase small subunit (273 aa).

Adenosylcob(III)alamin is bound by residues V164, E185, and C214.

This sequence belongs to the EutC family. In terms of assembly, the basic unit is a heterodimer which dimerizes to form tetramers. The heterotetramers trimerize; 6 large subunits form a core ring with 6 small subunits projecting outwards. Adenosylcob(III)alamin serves as cofactor.

It is found in the bacterial microcompartment. It carries out the reaction ethanolamine = acetaldehyde + NH4(+). It participates in amine and polyamine degradation; ethanolamine degradation. Catalyzes the deamination of various vicinal amino-alcohols to oxo compounds. Allows this organism to utilize ethanolamine as the sole source of nitrogen and carbon in the presence of external vitamin B12. This is Ethanolamine ammonia-lyase small subunit from Pseudomonas aeruginosa (strain LESB58).